We begin with the raw amino-acid sequence, 254 residues long: tRNA (guanine-N(7)-)-methyltransferase (254 aa).

The segment at 1 to 34 (MNTNTPAHPPEGAPLSEATQAALASAEHAPDSPG) is disordered. S-adenosyl-L-methionine contacts are provided by glutamate 87, glutamate 112, aspartate 139, and aspartate 162. The active site involves aspartate 162. Residues lysine 166, aspartate 198, and 233-236 (TKFE) each bind substrate.

This sequence belongs to the class I-like SAM-binding methyltransferase superfamily. TrmB family.

The enzyme catalyses guanosine(46) in tRNA + S-adenosyl-L-methionine = N(7)-methylguanosine(46) in tRNA + S-adenosyl-L-homocysteine. The protein operates within tRNA modification; N(7)-methylguanine-tRNA biosynthesis. Catalyzes the formation of N(7)-methylguanine at position 46 (m7G46) in tRNA. The chain is tRNA (guanine-N(7)-)-methyltransferase from Bordetella bronchiseptica (strain ATCC BAA-588 / NCTC 13252 / RB50) (Alcaligenes bronchisepticus).